Consider the following 349-residue polypeptide: MGCESSLDPRVARLIDANLDRAREGLRVVEDWCRFGLERDDLVISLKDWRQRLGKLHQERYKRARSTVTDPGAGMEHPAQLDRHSPRQVVEANCGRVQEALRVLEEYGRNVDAPLSAEAAAIRYGLYDLEVTCLTATSGNNRRNRLQDCQLCLITSPCPDLVDRVKTALRSGVAMVQHRCKSGSDLERLAEARTLAALCRDHGALLIINDRIDLALAVDADGVHLGQDDLPTDVARGLIGPGRLLGRSTHSLNQVAEAHREDCDYLGLGPVNNTAVKPERPAIGAALVGEALAITHKPVFAIGGISQANLDALMAVGCRRVAVIGAIMGSDNPEKASQNLLSSLSRPTL.

A unknown region spans residues 1 to 125; the sequence is MGCESSLDPR…SAEAAAIRYG (125 aa). The disordered stretch occupies residues 63 to 85; it reads RARSTVTDPGAGMEHPAQLDRHS. Residues 126-349 form a thiamine-phosphate synthase region; sequence LYDLEVTCLT…LLSSLSRPTL (224 aa). Residues 177 to 181 and Asn-209 each bind 4-amino-2-methyl-5-(diphosphooxymethyl)pyrimidine; that span reads QHRCK. The Mg(2+) site is built by Asp-210 and Asp-229. 2 residues coordinate 4-amino-2-methyl-5-(diphosphooxymethyl)pyrimidine: Ser-248 and Lys-277. Residue Gly-304 participates in 2-[(2R,5Z)-2-carboxy-4-methylthiazol-5(2H)-ylidene]ethyl phosphate binding.

The protein belongs to the thiamine-phosphate synthase family. Mg(2+) is required as a cofactor.

It catalyses the reaction 2-[(2R,5Z)-2-carboxy-4-methylthiazol-5(2H)-ylidene]ethyl phosphate + 4-amino-2-methyl-5-(diphosphooxymethyl)pyrimidine + 2 H(+) = thiamine phosphate + CO2 + diphosphate. The catalysed reaction is 2-(2-carboxy-4-methylthiazol-5-yl)ethyl phosphate + 4-amino-2-methyl-5-(diphosphooxymethyl)pyrimidine + 2 H(+) = thiamine phosphate + CO2 + diphosphate. The enzyme catalyses 4-methyl-5-(2-phosphooxyethyl)-thiazole + 4-amino-2-methyl-5-(diphosphooxymethyl)pyrimidine + H(+) = thiamine phosphate + diphosphate. The protein operates within cofactor biosynthesis; thiamine diphosphate biosynthesis; thiamine phosphate from 4-amino-2-methyl-5-diphosphomethylpyrimidine and 4-methyl-5-(2-phosphoethyl)-thiazole: step 1/1. In terms of biological role, condenses 4-methyl-5-(beta-hydroxyethyl)thiazole monophosphate (THZ-P) and 2-methyl-4-amino-5-hydroxymethyl pyrimidine pyrophosphate (HMP-PP) to form thiamine monophosphate (TMP). This is Thiamine-phosphate synthase from Parasynechococcus marenigrum (strain WH8102).